Reading from the N-terminus, the 446-residue chain is Argininosuccinate synthase (446 aa).

Residues 17–25 (AFSGGLDTS) and alanine 43 contribute to the ATP site. Tyrosine 99 contributes to the L-citrulline binding site. 2 residues coordinate ATP: glycine 129 and threonine 131. 3 residues coordinate L-aspartate: threonine 131, asparagine 135, and aspartate 136. Asparagine 135 is an L-citrulline binding site. Aspartate 136 contacts ATP. Arginine 139 and serine 192 together coordinate L-citrulline. An ATP-binding site is contributed by aspartate 194. Residues threonine 201, glutamate 203, and glutamate 280 each coordinate L-citrulline.

It belongs to the argininosuccinate synthase family. Type 2 subfamily. Homotetramer.

It localises to the cytoplasm. It catalyses the reaction L-citrulline + L-aspartate + ATP = 2-(N(omega)-L-arginino)succinate + AMP + diphosphate + H(+). It participates in amino-acid biosynthesis; L-arginine biosynthesis; L-arginine from L-ornithine and carbamoyl phosphate: step 2/3. This Methylibium petroleiphilum (strain ATCC BAA-1232 / LMG 22953 / PM1) protein is Argininosuccinate synthase.